The chain runs to 880 residues: Alanine--tRNA ligase (880 aa).

Zn(2+)-binding residues include His-567, His-571, Cys-669, and His-673.

It belongs to the class-II aminoacyl-tRNA synthetase family. The cofactor is Zn(2+).

It is found in the cytoplasm. The enzyme catalyses tRNA(Ala) + L-alanine + ATP = L-alanyl-tRNA(Ala) + AMP + diphosphate. In terms of biological role, catalyzes the attachment of alanine to tRNA(Ala) in a two-step reaction: alanine is first activated by ATP to form Ala-AMP and then transferred to the acceptor end of tRNA(Ala). Also edits incorrectly charged Ser-tRNA(Ala) and Gly-tRNA(Ala) via its editing domain. The chain is Alanine--tRNA ligase from Bacillus thuringiensis (strain Al Hakam).